Here is a 511-residue protein sequence, read N- to C-terminus: Bifunctional purine biosynthesis protein PurH (511 aa).

Positions 1 to 145 (MKQRALVSVS…KNHKFVSVIV (145 aa)) constitute an MGS-like domain.

It belongs to the PurH family.

It catalyses the reaction (6R)-10-formyltetrahydrofolate + 5-amino-1-(5-phospho-beta-D-ribosyl)imidazole-4-carboxamide = 5-formamido-1-(5-phospho-D-ribosyl)imidazole-4-carboxamide + (6S)-5,6,7,8-tetrahydrofolate. The catalysed reaction is IMP + H2O = 5-formamido-1-(5-phospho-D-ribosyl)imidazole-4-carboxamide. It functions in the pathway purine metabolism; IMP biosynthesis via de novo pathway; 5-formamido-1-(5-phospho-D-ribosyl)imidazole-4-carboxamide from 5-amino-1-(5-phospho-D-ribosyl)imidazole-4-carboxamide (10-formyl THF route): step 1/1. Its pathway is purine metabolism; IMP biosynthesis via de novo pathway; IMP from 5-formamido-1-(5-phospho-D-ribosyl)imidazole-4-carboxamide: step 1/1. The sequence is that of Bifunctional purine biosynthesis protein PurH from Bacillus cereus (strain AH187).